Reading from the N-terminus, the 553-residue chain is Putative transport protein YidE (553 aa).

5 consecutive transmembrane segments (helical) span residues 4–24 (IALTVSILALVAVVGLFIGNV), 28–48 (GIGLGIGGVLFGGIIVGHFVS), 65–85 (FGLILFVYTIGIQVGPGFFAS), 95–115 (LFAVLIVIIGGLVTAILHKLF), and 158–178 (MSYAMAYPFGICGILFTMWML). 2 consecutive RCK C-terminal domains span residues 191–276 (QQHE…VIGQ) and 279–361 (DTSL…VLGN). 6 consecutive transmembrane segments (helical) span residues 371-391 (MLPVFIGIGLGVLLGSIPVFV), 393-413 (GFPAALKLGLAGGLLIMALIL), 431-448 (NLALRELGIVLFLSVVGL), 464-484 (LSWIGYGALITAVPLITVGIL), 493-513 (YLTMCGMLAGSMTDPPALAFA), and 533-553 (LVMFLRIITPQLLAVLFWSIG).

Belongs to the AAE transporter (TC 2.A.81) family. YidE subfamily.

Its subcellular location is the cell membrane. This is Putative transport protein YidE from Shigella sonnei (strain Ss046).